Reading from the N-terminus, the 425-residue chain is Protein-glutamate methylesterase/protein-glutamine glutaminase (425 aa).

In terms of domain architecture, Response regulatory spans 22–140; the sequence is RVMVVDDSVV…EVAAADIFRH (119 aa). Position 73 is a 4-aspartylphosphate (Asp-73). 2 disordered regions span residues 150–174 and 203–223; these read AAKR…SNAS and VQRE…RPQP. In terms of domain architecture, CheB-type methylesterase spans 221–417; the sequence is PQPTLRSFSA…PLQQIAPKLV (197 aa). Active-site residues include Ser-241, His-269, and Asp-365.

This sequence belongs to the CheB family. Phosphorylated by CheA. Phosphorylation of the N-terminal regulatory domain activates the methylesterase activity.

It localises to the cytoplasm. It catalyses the reaction [protein]-L-glutamate 5-O-methyl ester + H2O = L-glutamyl-[protein] + methanol + H(+). It carries out the reaction L-glutaminyl-[protein] + H2O = L-glutamyl-[protein] + NH4(+). Its function is as follows. Involved in chemotaxis. Part of a chemotaxis signal transduction system that modulates chemotaxis in response to various stimuli. Catalyzes the demethylation of specific methylglutamate residues introduced into the chemoreceptors (methyl-accepting chemotaxis proteins or MCP) by CheR. Also mediates the irreversible deamidation of specific glutamine residues to glutamic acid. The chain is Protein-glutamate methylesterase/protein-glutamine glutaminase from Nitrobacter winogradskyi (strain ATCC 25391 / DSM 10237 / CIP 104748 / NCIMB 11846 / Nb-255).